The primary structure comprises 240 residues: Protein UL136 (240 aa).

Residues 69–89 form a helical membrane-spanning segment; that stretch reads VICAVLLTLMIMAIGALIAYL. Disordered regions lie at residues 119 to 143 and 164 to 200; these read ERQRSRRRAMDVPDPELGDPARRPL and TRPAPPALSSPETGDDSNDDAVAGGGAGGVTSSATRT.

This sequence belongs to the HHV-5 UL136 protein family. In terms of assembly, interacts with host ATP1B1.

It localises to the host membrane. The protein is Protein UL136 (UL136) of Human cytomegalovirus (strain Merlin) (HHV-5).